A 154-amino-acid polypeptide reads, in one-letter code: MLGLGVDRLQADINRLLASLFHQGVLDEQFLQLQQLQDETSPNFVYDVINIYFDESEKLLRNLRLLLMDREFSDYKKIGLHLNQLVGSSSSIGARRVRNVCVAFRSASELSNRPGCLRGLEVVEHEYHYLKNMMHELFQLEQQRILAAGVRYPM.

Met-1 is modified (N-acetylmethionine). Positions 41-137 (SPNFVYDVIN…HYLKNMMHEL (97 aa)) constitute an HPt domain.

As to quaternary structure, interacts with AHK5.

The protein localises to the cytoplasm. The protein resides in the cytosol. It localises to the nucleus. Functions as a two-component phosphorelay mediator between cytokinin sensor histidine kinases and response regulators (B-type ARRs). Plays an important role in propagating cytokinin signal transduction. The polypeptide is Pseudo histidine-containing phosphotransfer protein 6 (AHP6) (Arabidopsis thaliana (Mouse-ear cress)).